Reading from the N-terminus, the 551-residue chain is Glucans biosynthesis protein D (551 aa).

A signal peptide (tat-type signal) is located at residues 1–32 (MDRRRFIKGSMAMAAVCGTSGIASLFSQAAFA).

Belongs to the OpgD/OpgG family. In terms of processing, predicted to be exported by the Tat system. The position of the signal peptide cleavage has not been experimentally proven.

It is found in the periplasm. The protein operates within glycan metabolism; osmoregulated periplasmic glucan (OPG) biosynthesis. Its function is as follows. Probably involved in the control of the structural glucose backbone of osmoregulated periplasmic glucans (OPGs). This is Glucans biosynthesis protein D from Escherichia coli O127:H6 (strain E2348/69 / EPEC).